A 183-amino-acid chain; its full sequence is Small ribosomal subunit protein uS4c (183 aa).

In terms of domain architecture, S4 RNA-binding spans 82–143 (MRLDNILFRL…KQRSKALIQN (62 aa)).

This sequence belongs to the universal ribosomal protein uS4 family. In terms of assembly, part of the 30S ribosomal subunit. Contacts protein S5. The interaction surface between S4 and S5 is involved in control of translational fidelity.

It localises to the plastid. The protein resides in the chloroplast. Functionally, one of the primary rRNA binding proteins, it binds directly to 16S rRNA where it nucleates assembly of the body of the 30S subunit. Its function is as follows. With S5 and S12 plays an important role in translational accuracy. This chain is Small ribosomal subunit protein uS4c (rps4), found in Crocosmia sp. (strain Porto Alegre 034).